A 70-amino-acid chain; its full sequence is Protein SlyX homolog (70 aa).

Belongs to the SlyX family.

The polypeptide is Protein SlyX homolog (Shewanella pealeana (strain ATCC 700345 / ANG-SQ1)).